The following is a 361-amino-acid chain: Peptide chain release factor 1 (361 aa).

Glutamine 235 is subject to N5-methylglutamine.

The protein belongs to the prokaryotic/mitochondrial release factor family. In terms of processing, methylated by PrmC. Methylation increases the termination efficiency of RF1.

The protein resides in the cytoplasm. Peptide chain release factor 1 directs the termination of translation in response to the peptide chain termination codons UAG and UAA. The protein is Peptide chain release factor 1 of Xanthomonas campestris pv. campestris (strain 8004).